We begin with the raw amino-acid sequence, 188 residues long: dCTP deaminase (188 aa).

DCTP-binding positions include 111–116 (KSTYAR), 135–137 (TLE), Gln-156, Tyr-170, and Gln-180. The active-site Proton donor/acceptor is the Glu-137.

This sequence belongs to the dCTP deaminase family. In terms of assembly, homotrimer.

The catalysed reaction is dCTP + H2O + H(+) = dUTP + NH4(+). The protein operates within pyrimidine metabolism; dUMP biosynthesis; dUMP from dCTP (dUTP route): step 1/2. Its function is as follows. Catalyzes the deamination of dCTP to dUTP. The polypeptide is dCTP deaminase (Azotobacter vinelandii (strain DJ / ATCC BAA-1303)).